A 321-amino-acid chain; its full sequence is MFNELVKKIKSGLEITFEEALALGGLDEDRLNELFLAALQVNRHFHGNRVDLCSIVNARSGRCSEDCAFCAQSGHYRTEAPVYPLLSKEEILERAREMELRGARRFALVTSGRGISESDFEKVLDIYQMLKEKTGLGLCASLGIIGYDKAVRLKEAGVGMYHHNLETCRSYFPHICTTHSFDERVETVKAAKEAGLEVCSGGIIGLGESWRHRVEMAFHLKELGVASVPINILTPVKGTPLWGRPLLEPVEVLRTAAMFRLVLPGALIRLCGGREAALRDLQPLALLAGVNALMVGNYLTTSGRRVEDDLQMVADLKLSVM.

A Radical SAM core domain is found at 45–274 (FHGNRVDLCS…GALIRLCGGR (230 aa)). 3 residues coordinate [4Fe-4S] cluster: Cys-63, Cys-67, and Cys-70. [2Fe-2S] cluster contacts are provided by Cys-139, Cys-199, and Arg-269.

It belongs to the radical SAM superfamily. Biotin synthase family. As to quaternary structure, homodimer. It depends on [4Fe-4S] cluster as a cofactor. The cofactor is [2Fe-2S] cluster.

It catalyses the reaction (4R,5S)-dethiobiotin + (sulfur carrier)-SH + 2 reduced [2Fe-2S]-[ferredoxin] + 2 S-adenosyl-L-methionine = (sulfur carrier)-H + biotin + 2 5'-deoxyadenosine + 2 L-methionine + 2 oxidized [2Fe-2S]-[ferredoxin]. It functions in the pathway cofactor biosynthesis; biotin biosynthesis; biotin from 7,8-diaminononanoate: step 2/2. Catalyzes the conversion of dethiobiotin (DTB) to biotin by the insertion of a sulfur atom into dethiobiotin via a radical-based mechanism. The sequence is that of Biotin synthase from Pelotomaculum thermopropionicum (strain DSM 13744 / JCM 10971 / SI).